Reading from the N-terminus, the 551-residue chain is uncharacterized protein (551 aa).

Residues Met1–Trp36 constitute a mitochondrion transit peptide. Positions Thr203–Glu315 form a coiled coil. Residues Arg354–Lys389 form a disordered region. The segment covering Pro366 to Gly384 has biased composition (polar residues). Positions Lys405–Ser439 form a coiled coil. The disordered stretch occupies residues Leu519 to Asp551. The span at Met541–Asp551 shows a compositional bias: polar residues.

In terms of assembly, interacts with NOD2.

Its subcellular location is the mitochondrion. This is an uncharacterized protein from Homo sapiens (Human).